A 355-amino-acid chain; its full sequence is GTPase Obg (355 aa).

In terms of domain architecture, Obg spans 1 to 159; it reads MKFLDEAKVY…KTIWLRLKLI (159 aa). The 168-residue stretch at 160-327 folds into the OBG-type G domain; that stretch reads ADAGLVGLPN…ALRALRDIIV (168 aa). GTP-binding positions include 166-173, 191-195, 212-215, 279-282, and 308-310; these read GLPNAGKS, FTTLH, DIPG, SQID, and SAA. Mg(2+) contacts are provided by S173 and T193. Residues 333-355 form a disordered region; sequence GDTALPDRSMPHESEVEEEDDRL.

It belongs to the TRAFAC class OBG-HflX-like GTPase superfamily. OBG GTPase family. As to quaternary structure, monomer. Mg(2+) is required as a cofactor.

The protein localises to the cytoplasm. In terms of biological role, an essential GTPase which binds GTP, GDP and possibly (p)ppGpp with moderate affinity, with high nucleotide exchange rates and a fairly low GTP hydrolysis rate. Plays a role in control of the cell cycle, stress response, ribosome biogenesis and in those bacteria that undergo differentiation, in morphogenesis control. This is GTPase Obg from Agrobacterium fabrum (strain C58 / ATCC 33970) (Agrobacterium tumefaciens (strain C58)).